We begin with the raw amino-acid sequence, 339 residues long: HTH-type transcriptional regulator SyrM 2 (339 aa).

The 58-residue stretch at 32-89 (VDLNLLVELEALLQYRNITHAAQHVGRSQPAMSRALSRLRDMFNDDLLVRGSSGLVPT) folds into the HTH lysR-type domain. The segment at residues 49–68 (ITHAAQHVGRSQPAMSRALS) is a DNA-binding region (H-T-H motif).

The protein belongs to the LysR transcriptional regulatory family.

Functionally, acts in trans to stimulate nod gene expression. The polypeptide is HTH-type transcriptional regulator SyrM 2 (syrM2) (Sinorhizobium fredii (strain NBRC 101917 / NGR234)).